The sequence spans 446 residues: Methionine aminopeptidase 2-3 (446 aa).

The segment at 14 to 116 is disordered; the sequence is ITDAGANGAD…ENRYRTTSEE (103 aa). Over residues 61-76 the composition is skewed to basic residues; it reads AKKKKNKKRKPKKKQP. A compositionally biased stretch (polar residues) spans 86–96; the sequence is PLSQLFPNNSY. A compositionally biased stretch (basic and acidic residues) spans 98 to 116; it reads KGEEVEYKDENRYRTTSEE. Position 199 (His199) interacts with substrate. Asp219, Asp230, and His299 together coordinate a divalent metal cation. Position 307 (His307) interacts with substrate. A divalent metal cation-binding residues include Glu332 and Glu427.

This sequence belongs to the peptidase M24A family. Methionine aminopeptidase eukaryotic type 2 subfamily. Co(2+) serves as cofactor. Zn(2+) is required as a cofactor. The cofactor is Mn(2+). It depends on Fe(2+) as a cofactor.

It localises to the cytoplasm. It catalyses the reaction Release of N-terminal amino acids, preferentially methionine, from peptides and arylamides.. Its function is as follows. Cotranslationally removes the N-terminal methionine from nascent proteins. The N-terminal methionine is often cleaved when the second residue in the primary sequence is small and uncharged (Met-Ala-, Cys, Gly, Pro, Ser, Thr, or Val). In Aspergillus fumigatus (strain CBS 144.89 / FGSC A1163 / CEA10) (Neosartorya fumigata), this protein is Methionine aminopeptidase 2-3.